We begin with the raw amino-acid sequence, 127 residues long: NADPH-dependent 7-cyano-7-deazaguanine reductase (127 aa).

Cys-40 serves as the catalytic Thioimide intermediate. Asp-47 serves as the catalytic Proton donor. Substrate is bound by residues 62–64 and 81–82; these read VEL and HE.

This sequence belongs to the GTP cyclohydrolase I family. QueF type 1 subfamily.

The protein resides in the cytoplasm. It catalyses the reaction 7-aminomethyl-7-carbaguanine + 2 NADP(+) = 7-cyano-7-deazaguanine + 2 NADPH + 3 H(+). It participates in tRNA modification; tRNA-queuosine biosynthesis. Its function is as follows. Catalyzes the NADPH-dependent reduction of 7-cyano-7-deazaguanine (preQ0) to 7-aminomethyl-7-deazaguanine (preQ1). This Campylobacter jejuni subsp. jejuni serotype O:6 (strain 81116 / NCTC 11828) protein is NADPH-dependent 7-cyano-7-deazaguanine reductase.